The sequence spans 118 residues: Large ribosomal subunit protein uL18 (118 aa).

The protein belongs to the universal ribosomal protein uL18 family. As to quaternary structure, part of the 50S ribosomal subunit; part of the 5S rRNA/L5/L18/L25 subcomplex. Contacts the 5S and 23S rRNAs.

In terms of biological role, this is one of the proteins that bind and probably mediate the attachment of the 5S RNA into the large ribosomal subunit, where it forms part of the central protuberance. In Campylobacter jejuni subsp. jejuni serotype O:2 (strain ATCC 700819 / NCTC 11168), this protein is Large ribosomal subunit protein uL18.